A 306-amino-acid chain; its full sequence is UDP-3-O-acyl-N-acetylglucosamine deacetylase (306 aa).

Positions 79, 239, and 243 each coordinate Zn(2+). The active-site Proton donor is the H266.

It belongs to the LpxC family. It depends on Zn(2+) as a cofactor.

The enzyme catalyses a UDP-3-O-[(3R)-3-hydroxyacyl]-N-acetyl-alpha-D-glucosamine + H2O = a UDP-3-O-[(3R)-3-hydroxyacyl]-alpha-D-glucosamine + acetate. It participates in glycolipid biosynthesis; lipid IV(A) biosynthesis; lipid IV(A) from (3R)-3-hydroxytetradecanoyl-[acyl-carrier-protein] and UDP-N-acetyl-alpha-D-glucosamine: step 2/6. Functionally, catalyzes the hydrolysis of UDP-3-O-myristoyl-N-acetylglucosamine to form UDP-3-O-myristoylglucosamine and acetate, the committed step in lipid A biosynthesis. The chain is UDP-3-O-acyl-N-acetylglucosamine deacetylase from Glaesserella parasuis serovar 5 (strain SH0165) (Haemophilus parasuis).